The following is a 981-amino-acid chain: Ubiquitin carboxyl-terminal hydrolase 37 (981 aa).

The KEN box 1 motif lies at lysine 32–asparagine 34. Short sequence motifs (D-box) lie at residues arginine 71 to asparagine 79 and arginine 96 to asparagine 105. Residues methionine 111 to proline 308 are disordered. A Phosphoserine modification is found at serine 114. Polar residues predominate over residues arginine 135 to arginine 148. The segment covering glycine 149–phenylalanine 159 has biased composition (basic and acidic residues). Residues arginine 160–arginine 168 carry the D-box 3 motif. A Phosphoserine modification is found at serine 170. Residues lysine 172 to leucine 195 show a composition bias toward polar residues. Serine 212 carries the post-translational modification Phosphoserine. A KEN box 2 motif is present at residues lysine 223–asparagine 225. Over residues serine 245–arginine 259 the composition is skewed to basic and acidic residues. The span at leucine 266–alanine 300 shows a compositional bias: polar residues. The region spanning glutamine 343–lysine 953 is the USP domain. The active-site Nucleophile is cysteine 352. Serine 630 carries the phosphoserine; by CDK2 modification. A phosphoserine mark is found at serine 652 and serine 654. Disordered stretches follow at residues glycine 673–glycine 704 and lysine 719–glutamate 831. Composition is skewed to basic and acidic residues over residues lysine 683–leucine 697 and lysine 719–proline 734. The UIM 1 domain maps to serine 706 to threonine 725. Serine 772 carries the phosphoserine modification. The segment covering isoleucine 776–threonine 788 has biased composition (basic and acidic residues). Positions lysine 784 to asparagine 786 match the KEN box 3 motif. 2 UIM domains span residues arginine 808–tryptophan 827 and lysine 830–serine 849. The segment covering leucine 813–glutamine 824 has biased composition (low complexity). Histidine 908 functions as the Proton acceptor in the catalytic mechanism.

The protein belongs to the peptidase C19 family. In terms of assembly, interacts with FZR1/CDH1. Interacts with CDT1. In terms of processing, polyubiquitinated via 'Lys-11'-linked ubiquitin by the APC(CDH1) complex during late mitosis, leading to its degradation. Able to mediate auto-deubiquitination. Post-translationally, phosphorylated at Ser-630 by CDK2 during G1/S phase but not during mitosis; phosphorylation at Ser-630 is required for deubiquitinase activity. Also polyubiquitinated during early G1 phase, without leading to degradation. Phosphorylated at Ser-114 by ATM following DNA damage, which in turn increases its deubiquitination activity towards BLM.

The protein localises to the nucleus. The protein resides in the chromosome. The enzyme catalyses Thiol-dependent hydrolysis of ester, thioester, amide, peptide and isopeptide bonds formed by the C-terminal Gly of ubiquitin (a 76-residue protein attached to proteins as an intracellular targeting signal).. Deubiquitinase that plays a role in different processes including cell cycle regulation, DNA replication or DNA damage response. Antagonizes the anaphase-promoting complex (APC/C) during G1/S transition by mediating deubiquitination of cyclin-A (CCNA1 and CCNA2), thereby promoting S phase entry. Specifically mediates deubiquitination of 'Lys-11'-linked polyubiquitin chains, a specific ubiquitin-linkage type mediated by the APC/C complex. Phosphorylation at Ser-628 during G1/S phase maximizes the deubiquitinase activity, leading to prevent degradation of cyclin-A (CCNA1 and CCNA2). Plays an important role in the regulation of DNA replication by stabilizing the licensing factor CDT1. Also plays an essential role beyond S-phase entry to promote the efficiency and fidelity of replication by deubiquitinating checkpoint kinase 1/CHK1, promoting its stability. Sustains the DNA damage response (DDR) by deubiquitinating and stabilizing the ATP-dependent DNA helicase BLM. Mechanistically, DNA double-strand breaks (DSB) promotes ATM-mediated phosphorylation of USP37 and enhances the binding between USP37 and BLM. Promotes cell migration by deubiquitinating and stabilizing the epithelial-mesenchymal transition (EMT)-inducing transcription factor SNAI. Plays a role in the regulation of mitotic spindle assembly and mitotic progression by associating with chromatin-associated WAPL and stabilizing it through deubiquitination. This Canis lupus familiaris (Dog) protein is Ubiquitin carboxyl-terminal hydrolase 37 (USP37).